The chain runs to 138 residues: MMIWKRDLTLDELNATSQNTLVAHLGIVYTRLGDEVLEAEMPVDIRTHQPFGLLHGGASAALAETLGSMAGYLMTRDGQCVVGTELNATHHRAVSQGKVRGVCQPLHLGRQNQSWEITLFDEQGRRCCTCRLGTAVMG.

Glutamate 64 acts as the Nucleophile or proton acceptor in catalysis.

Belongs to the thioesterase PaaI family. In terms of assembly, homotetramer. Dimer of dimers. Interacts specifically with the aryl carrier protein (ArCP) domain of EntB.

The protein localises to the cytoplasm. It participates in siderophore biosynthesis; enterobactin biosynthesis. In terms of biological role, required for optimal enterobactin synthesis. Acts as a proofreading enzyme that prevents EntB misacylation by hydrolyzing the thioester bound existing between EntB and wrongly charged molecules. In Salmonella arizonae (strain ATCC BAA-731 / CDC346-86 / RSK2980), this protein is Proofreading thioesterase EntH.